The primary structure comprises 275 residues: Elongation factor Ts (275 aa).

The segment at 76 to 79 (TDFV) is involved in Mg(2+) ion dislocation from EF-Tu.

Belongs to the EF-Ts family.

The protein resides in the cytoplasm. Associates with the EF-Tu.GDP complex and induces the exchange of GDP to GTP. It remains bound to the aminoacyl-tRNA.EF-Tu.GTP complex up to the GTP hydrolysis stage on the ribosome. This is Elongation factor Ts from Rhodococcus erythropolis (strain PR4 / NBRC 100887).